The sequence spans 879 residues: Leucine--tRNA ligase (879 aa).

The 'HIGH' region motif lies at 46-56 (PYPSGALHMGH). The 'KMSKS' region signature appears at 638 to 642 (KMSKS). Lysine 641 contributes to the ATP binding site.

It belongs to the class-I aminoacyl-tRNA synthetase family.

It is found in the cytoplasm. The enzyme catalyses tRNA(Leu) + L-leucine + ATP = L-leucyl-tRNA(Leu) + AMP + diphosphate. The chain is Leucine--tRNA ligase from Xanthomonas campestris pv. campestris (strain 8004).